A 343-amino-acid polypeptide reads, in one-letter code: Uroporphyrinogen decarboxylase (343 aa).

Substrate is bound by residues 21-25, D71, Y148, S203, and H316; that span reads RQAGR.

It belongs to the uroporphyrinogen decarboxylase family. As to quaternary structure, homodimer.

It localises to the cytoplasm. It catalyses the reaction uroporphyrinogen III + 4 H(+) = coproporphyrinogen III + 4 CO2. Its pathway is porphyrin-containing compound metabolism; protoporphyrin-IX biosynthesis; coproporphyrinogen-III from 5-aminolevulinate: step 4/4. Catalyzes the decarboxylation of four acetate groups of uroporphyrinogen-III to yield coproporphyrinogen-III. The chain is Uroporphyrinogen decarboxylase from Campylobacter fetus subsp. fetus (strain 82-40).